Here is a 190-residue protein sequence, read N- to C-terminus: Glutathione peroxidase 2 (190 aa).

U40 is an active-site residue. Residue U40 is a non-standard amino acid, selenocysteine.

Belongs to the glutathione peroxidase family. In terms of assembly, homotetramer.

The protein resides in the cytoplasm. It localises to the cytosol. The enzyme catalyses 2 glutathione + H2O2 = glutathione disulfide + 2 H2O. The catalysed reaction is a hydroperoxy polyunsaturated fatty acid + 2 glutathione = a hydroxy polyunsaturated fatty acid + glutathione disulfide + H2O. It catalyses the reaction tert-butyl hydroperoxide + 2 glutathione = tert-butanol + glutathione disulfide + H2O. It carries out the reaction cumene hydroperoxide + 2 glutathione = 2-phenylpropan-2-ol + glutathione disulfide + H2O. The enzyme catalyses (13S)-hydroperoxy-(9Z,11E)-octadecadienoate + 2 glutathione = (13S)-hydroxy-(9Z,11E)-octadecadienoate + glutathione disulfide + H2O. The catalysed reaction is (5S)-hydroperoxy-(6E,8Z,11Z,14Z)-eicosatetraenoate + 2 glutathione = (5S)-hydroxy-(6E,8Z,11Z,14Z)-eicosatetraenoate + glutathione disulfide + H2O. It catalyses the reaction (12R)-hydroperoxy-(5Z,8Z,10E,14Z)-eicosatetraenoate + 2 glutathione = (12R)-hydroxy-(5Z,8Z,10E,14Z)-eicosatetraenoate + glutathione disulfide + H2O. It carries out the reaction (15S)-hydroperoxy-(5Z,8Z,11Z,13E)-eicosatetraenoate + 2 glutathione = (15S)-hydroxy-(5Z,8Z,11Z,13E)-eicosatetraenoate + glutathione disulfide + H2O. Functionally, catalyzes the reduction of hydroperoxides in a glutathione-dependent manner thus regulating cellular redox homeostasis. Can reduce small soluble hydroperoxides such as H2O2, cumene hydroperoxide and tert-butyl hydroperoxide, as well as several fatty acid-derived hydroperoxides. Cannot reduce phosphatidycholine hydroperoxide. The chain is Glutathione peroxidase 2 (GPX2) from Pongo pygmaeus (Bornean orangutan).